Here is a 1444-residue protein sequence, read N- to C-terminus: DNA polymerase III PolC-type (1444 aa).

The Exonuclease domain occupies 428 to 584 (YCVFDVETTG…FDAEATAYLA (157 aa)).

Belongs to the DNA polymerase type-C family. PolC subfamily.

The protein localises to the cytoplasm. The enzyme catalyses DNA(n) + a 2'-deoxyribonucleoside 5'-triphosphate = DNA(n+1) + diphosphate. Required for replicative DNA synthesis. This DNA polymerase also exhibits 3' to 5' exonuclease activity. The sequence is that of DNA polymerase III PolC-type from Listeria monocytogenes serovar 1/2a (strain ATCC BAA-679 / EGD-e).